A 252-amino-acid polypeptide reads, in one-letter code: Phosphate import ATP-binding protein PstB 2 (252 aa).

Positions 6 to 247 (ISINDLSVYF…PQHKETEDYI (242 aa)) constitute an ABC transporter domain. 38–45 (GPSGSGKS) lines the ATP pocket.

The protein belongs to the ABC transporter superfamily. Phosphate importer (TC 3.A.1.7) family. In terms of assembly, the complex is composed of two ATP-binding proteins (PstB), two transmembrane proteins (PstC and PstA) and a solute-binding protein (PstS).

The protein localises to the cell membrane. The catalysed reaction is phosphate(out) + ATP + H2O = ADP + 2 phosphate(in) + H(+). Part of the ABC transporter complex PstSACB involved in phosphate import. Responsible for energy coupling to the transport system. This chain is Phosphate import ATP-binding protein PstB 2, found in Streptococcus thermophilus (strain CNRZ 1066).